The following is a 328-amino-acid chain: Serine/threonine-protein phosphatase PP2A-2 catalytic subunit (328 aa).

Residues Asp-76, His-78, Asp-104, and Asn-136 each contribute to the Mn(2+) site. The active-site Proton donor is the His-137. 2 residues coordinate Mn(2+): His-186 and His-260. Leucine methyl ester is present on Leu-328.

This sequence belongs to the PPP phosphatase family. PP-2A subfamily. The cofactor is Mn(2+).

The catalysed reaction is O-phospho-L-seryl-[protein] + H2O = L-seryl-[protein] + phosphate. It carries out the reaction O-phospho-L-threonyl-[protein] + H2O = L-threonyl-[protein] + phosphate. In Blumeria hordei (Barley powdery mildew), this protein is Serine/threonine-protein phosphatase PP2A-2 catalytic subunit (PP2A-2).